We begin with the raw amino-acid sequence, 180 residues long: Large ribosomal subunit protein uL6 (180 aa).

It belongs to the universal ribosomal protein uL6 family. In terms of assembly, part of the 50S ribosomal subunit.

Functionally, this protein binds to the 23S rRNA, and is important in its secondary structure. It is located near the subunit interface in the base of the L7/L12 stalk, and near the tRNA binding site of the peptidyltransferase center. In Anaeromyxobacter sp. (strain K), this protein is Large ribosomal subunit protein uL6.